Consider the following 523-residue polypeptide: NAD(P)H-quinone oxidoreductase subunit 2 (523 aa).

A run of 13 helical transmembrane segments spans residues 29–49, 57–77, 94–114, 128–148, 182–202, 223–243, 255–275, 291–311, 317–337, 345–365, 389–409, 424–444, and 477–497; these read AVAPEGAVLLAMLATLLVDLA, WVPPICYAGLGTALLLLALQW, LAIAFRAVVALSTLLSLMISW, AGILLAATLGGMLLCGATDLV, LLVGSAAAAVFLYGSSLLYGL, AALALVFVLATVAFKIAAVPF, PTPVVAFLSVGSKAAGFALAL, LLFTVLAVLSMTLGNVVALAQ, MLAYSSIGQAGFVMIGLVCGT, VLYTAAYLFMNLGAFACIILF, LGLSLCLLSLGGIPPMLGFFG, VLVVVGLITSVISIYYYIGVI, and VALVTCVVVTAVGGILSNPLF.

This sequence belongs to the complex I subunit 2 family. As to quaternary structure, NDH-1 can be composed of about 15 different subunits; different subcomplexes with different compositions have been identified which probably have different functions.

The protein localises to the cellular thylakoid membrane. It carries out the reaction a plastoquinone + NADH + (n+1) H(+)(in) = a plastoquinol + NAD(+) + n H(+)(out). The catalysed reaction is a plastoquinone + NADPH + (n+1) H(+)(in) = a plastoquinol + NADP(+) + n H(+)(out). NDH-1 shuttles electrons from an unknown electron donor, via FMN and iron-sulfur (Fe-S) centers, to quinones in the respiratory and/or the photosynthetic chain. The immediate electron acceptor for the enzyme in this species is believed to be plastoquinone. Couples the redox reaction to proton translocation, and thus conserves the redox energy in a proton gradient. Cyanobacterial NDH-1 also plays a role in inorganic carbon-concentration. The chain is NAD(P)H-quinone oxidoreductase subunit 2 from Synechococcus sp. (strain WH7803).